Consider the following 163-residue polypeptide: Phosphopantetheine adenylyltransferase (163 aa).

Ser11 lines the substrate pocket. Residues Ser11–Phe12 and His19 each bind ATP. Substrate-binding residues include Lys43, Ala76, and Arg90. ATP contacts are provided by residues Gly91 to Arg93, Glu101, and Trp126 to Ser132.

This sequence belongs to the bacterial CoaD family. In terms of assembly, homohexamer. Mg(2+) is required as a cofactor.

Its subcellular location is the cytoplasm. The enzyme catalyses (R)-4'-phosphopantetheine + ATP + H(+) = 3'-dephospho-CoA + diphosphate. Its pathway is cofactor biosynthesis; coenzyme A biosynthesis; CoA from (R)-pantothenate: step 4/5. Reversibly transfers an adenylyl group from ATP to 4'-phosphopantetheine, yielding dephospho-CoA (dPCoA) and pyrophosphate. This chain is Phosphopantetheine adenylyltransferase, found in Streptococcus pyogenes serotype M6 (strain ATCC BAA-946 / MGAS10394).